A 119-amino-acid chain; its full sequence is Ribosome-binding factor A (119 aa).

It belongs to the RbfA family. In terms of assembly, monomer. Binds 30S ribosomal subunits, but not 50S ribosomal subunits or 70S ribosomes.

It localises to the cytoplasm. Functionally, one of several proteins that assist in the late maturation steps of the functional core of the 30S ribosomal subunit. Associates with free 30S ribosomal subunits (but not with 30S subunits that are part of 70S ribosomes or polysomes). Required for efficient processing of 16S rRNA. May interact with the 5'-terminal helix region of 16S rRNA. This chain is Ribosome-binding factor A, found in Geobacter sp. (strain M21).